The following is a 639-amino-acid chain: Extracellular metalloproteinase mep (639 aa).

The N-terminal stretch at methionine 1 to valine 16 is a signal peptide. The propeptide occupies cysteine 17–glutamate 245. 4 N-linked (GlcNAc...) asparagine glycosylation sites follow: asparagine 287, asparagine 320, asparagine 336, and asparagine 368. Residue histidine 429 participates in Zn(2+) binding. Residue glutamate 430 is part of the active site. Histidine 433 is a Zn(2+) binding site. An N-linked (GlcNAc...) asparagine glycan is attached at asparagine 509.

This sequence belongs to the peptidase M36 family. Zn(2+) is required as a cofactor.

It localises to the secreted. Its function is as follows. Secreted metalloproteinase that allows assimilation of proteinaceous substrates. This chain is Extracellular metalloproteinase mep (mep), found in Aspergillus flavus (strain ATCC 200026 / FGSC A1120 / IAM 13836 / NRRL 3357 / JCM 12722 / SRRC 167).